Consider the following 305-residue polypeptide: Tyrosine recombinase XerC (305 aa).

One can recognise a Core-binding (CB) domain in the interval 1–93 (MVLDGFAAHF…SWRQYCVWLV (93 aa)). Residues 114–294 (RVPKALPQEW…DFDHIARLYD (181 aa)) form the Tyr recombinase domain. Active-site residues include Arg155, Lys179, His246, Arg249, and His272. Catalysis depends on Tyr281, which acts as the O-(3'-phospho-DNA)-tyrosine intermediate.

Belongs to the 'phage' integrase family. XerC subfamily. In terms of assembly, forms a cyclic heterotetrameric complex composed of two molecules of XerC and two molecules of XerD.

The protein resides in the cytoplasm. Functionally, site-specific tyrosine recombinase, which acts by catalyzing the cutting and rejoining of the recombining DNA molecules. The XerC-XerD complex is essential to convert dimers of the bacterial chromosome into monomers to permit their segregation at cell division. It also contributes to the segregational stability of plasmids. The sequence is that of Tyrosine recombinase XerC from Neisseria meningitidis serogroup C / serotype 2a (strain ATCC 700532 / DSM 15464 / FAM18).